A 380-amino-acid polypeptide reads, in one-letter code: 4-hydroxy-3-methylbut-2-en-1-yl diphosphate synthase (flavodoxin) (380 aa).

Residues cysteine 275, cysteine 278, cysteine 310, and glutamate 317 each coordinate [4Fe-4S] cluster.

This sequence belongs to the IspG family. [4Fe-4S] cluster is required as a cofactor.

It catalyses the reaction (2E)-4-hydroxy-3-methylbut-2-enyl diphosphate + oxidized [flavodoxin] + H2O + 2 H(+) = 2-C-methyl-D-erythritol 2,4-cyclic diphosphate + reduced [flavodoxin]. It participates in isoprenoid biosynthesis; isopentenyl diphosphate biosynthesis via DXP pathway; isopentenyl diphosphate from 1-deoxy-D-xylulose 5-phosphate: step 5/6. Its function is as follows. Converts 2C-methyl-D-erythritol 2,4-cyclodiphosphate (ME-2,4cPP) into 1-hydroxy-2-methyl-2-(E)-butenyl 4-diphosphate. The chain is 4-hydroxy-3-methylbut-2-en-1-yl diphosphate synthase (flavodoxin) from Hyphomonas neptunium (strain ATCC 15444).